A 443-amino-acid polypeptide reads, in one-letter code: Glutamate--tRNA ligase 1 (443 aa).

The short motif at 9 to 19 is the 'HIGH' region element; it reads PSPTGYLHVGN. Positions 238–242 match the 'KMSKS' region motif; it reads KISKR. Residue K241 participates in ATP binding.

The protein belongs to the class-I aminoacyl-tRNA synthetase family. Glutamate--tRNA ligase type 1 subfamily. As to quaternary structure, monomer.

It localises to the cytoplasm. The catalysed reaction is tRNA(Glu) + L-glutamate + ATP = L-glutamyl-tRNA(Glu) + AMP + diphosphate. Its function is as follows. Catalyzes the attachment of glutamate to tRNA(Glu) in a two-step reaction: glutamate is first activated by ATP to form Glu-AMP and then transferred to the acceptor end of tRNA(Glu). This chain is Glutamate--tRNA ligase 1, found in Ehrlichia ruminantium (strain Welgevonden).